A 149-amino-acid polypeptide reads, in one-letter code: 3-hydroxyacyl-[acyl-carrier-protein] dehydratase FabZ (149 aa).

Residue His53 is part of the active site.

This sequence belongs to the thioester dehydratase family. FabZ subfamily.

The protein localises to the cytoplasm. It catalyses the reaction a (3R)-hydroxyacyl-[ACP] = a (2E)-enoyl-[ACP] + H2O. Functionally, involved in unsaturated fatty acids biosynthesis. Catalyzes the dehydration of short chain beta-hydroxyacyl-ACPs and long chain saturated and unsaturated beta-hydroxyacyl-ACPs. The protein is 3-hydroxyacyl-[acyl-carrier-protein] dehydratase FabZ of Neisseria meningitidis serogroup B (strain ATCC BAA-335 / MC58).